A 509-amino-acid polypeptide reads, in one-letter code: Maturase K (509 aa).

This sequence belongs to the intron maturase 2 family. MatK subfamily.

The protein resides in the plastid. The protein localises to the chloroplast. Usually encoded in the trnK tRNA gene intron. Probably assists in splicing its own and other chloroplast group II introns. The protein is Maturase K of Chamaecyparis obtusa (Hinoki false-cypress).